A 56-amino-acid chain; its full sequence is Large ribosomal subunit protein bL33 (56 aa).

Belongs to the bacterial ribosomal protein bL33 family.

This Rickettsia typhi (strain ATCC VR-144 / Wilmington) protein is Large ribosomal subunit protein bL33.